Reading from the N-terminus, the 290-residue chain is Glycine--tRNA ligase alpha subunit (290 aa).

Belongs to the class-II aminoacyl-tRNA synthetase family. Tetramer of two alpha and two beta subunits.

It is found in the cytoplasm. The catalysed reaction is tRNA(Gly) + glycine + ATP = glycyl-tRNA(Gly) + AMP + diphosphate. The sequence is that of Glycine--tRNA ligase alpha subunit from Brachyspira hyodysenteriae (strain ATCC 49526 / WA1).